The following is a 404-amino-acid chain: tRNA N6-adenosine threonylcarbamoyltransferase, mitochondrial (404 aa).

The N-terminal 27 residues, 1 to 27 (MFQSCLPGALRSWSRGVFSTSTRPRLV), are a transit peptide targeting the mitochondrion. A divalent metal cation-binding residues include His-135 and His-139. Substrate is bound by residues 157–161 (LVSGG), Asp-190, Gly-210, Glu-214, 317–318 (SN), and Thr-345. Asp-346 lines the a divalent metal cation pocket.

Belongs to the KAE1 / TsaD family. As to quaternary structure, monomer. It depends on a divalent metal cation as a cofactor.

The protein localises to the mitochondrion. The enzyme catalyses L-threonylcarbamoyladenylate + adenosine(37) in tRNA = N(6)-L-threonylcarbamoyladenosine(37) in tRNA + AMP + H(+). Its function is as follows. Required for the formation of a threonylcarbamoyl group on adenosine at position 37 (t(6)A37) in mitochondrial tRNAs that read codons beginning with adenine. Probably involved in the transfer of the threonylcarbamoyl moiety of threonylcarbamoyl-AMP (TC-AMP) to the N6 group of A37. Involved in mitochondrial genome maintenance. The polypeptide is tRNA N6-adenosine threonylcarbamoyltransferase, mitochondrial (Danio rerio (Zebrafish)).